The sequence spans 675 residues: UvrABC system protein B (675 aa).

Residues 32–417 form the Helicase ATP-binding domain; it reads EGLSDGLAYQ…EHAGQVVEQV (386 aa). 45–52 lines the ATP pocket; it reads GVTGSGKT. The Beta-hairpin motif lies at 98–121; sequence YYDYYQPEAYVPSRDLFIEKDSAI. A Helicase C-terminal domain is found at 436-602; that stretch reads QVDDLMSEIN…QIKKQVKDII (167 aa). Residues 634 to 669 form the UVR domain; it reads IKEIAKLEKAMQQAARDLQFEEAAVLRDRISNIKEN.

This sequence belongs to the UvrB family. Forms a heterotetramer with UvrA during the search for lesions. Interacts with UvrC in an incision complex.

The protein localises to the cytoplasm. In terms of biological role, the UvrABC repair system catalyzes the recognition and processing of DNA lesions. A damage recognition complex composed of 2 UvrA and 2 UvrB subunits scans DNA for abnormalities. Upon binding of the UvrA(2)B(2) complex to a putative damaged site, the DNA wraps around one UvrB monomer. DNA wrap is dependent on ATP binding by UvrB and probably causes local melting of the DNA helix, facilitating insertion of UvrB beta-hairpin between the DNA strands. Then UvrB probes one DNA strand for the presence of a lesion. If a lesion is found the UvrA subunits dissociate and the UvrB-DNA preincision complex is formed. This complex is subsequently bound by UvrC and the second UvrB is released. If no lesion is found, the DNA wraps around the other UvrB subunit that will check the other stand for damage. The protein is UvrABC system protein B of Neisseria gonorrhoeae (strain ATCC 700825 / FA 1090).